A 274-amino-acid polypeptide reads, in one-letter code: SPbeta prophage-derived UPF0714 protein YoqZ (274 aa).

This sequence belongs to the UPF0714 family.

The chain is SPbeta prophage-derived UPF0714 protein YoqZ (yoqZ) from Bacillus subtilis (strain 168).